Reading from the N-terminus, the 29-residue chain is NADH dehydrogenase [ubiquinone] 1 beta subcomplex subunit 10 (29 aa).

The disordered stretch occupies residues 1–29 (GRKKGVQFDEGAPDDFDPNNPYKKDVAFL).

It belongs to the complex I NDUFB10 subunit family. As to quaternary structure, complex I is composed of about 45 different subunits.

It localises to the mitochondrion inner membrane. Its function is as follows. Accessory subunit of the mitochondrial membrane respiratory chain NADH dehydrogenase (Complex I), that is believed not to be involved in catalysis. Complex I functions in the transfer of electrons from NADH to the respiratory chain. The immediate electron acceptor for the enzyme is believed to be ubiquinone. The polypeptide is NADH dehydrogenase [ubiquinone] 1 beta subcomplex subunit 10 (Solanum tuberosum (Potato)).